The sequence spans 258 residues: Thiazole synthase (258 aa).

Lys-98 (schiff-base intermediate with DXP) is an active-site residue. 1-deoxy-D-xylulose 5-phosphate-binding positions include Gly-159, 185 to 186, and 207 to 208; these read AG and NT.

The protein belongs to the ThiG family. Homotetramer. Forms heterodimers with either ThiH or ThiS.

It is found in the cytoplasm. It carries out the reaction [ThiS sulfur-carrier protein]-C-terminal-Gly-aminoethanethioate + 2-iminoacetate + 1-deoxy-D-xylulose 5-phosphate = [ThiS sulfur-carrier protein]-C-terminal Gly-Gly + 2-[(2R,5Z)-2-carboxy-4-methylthiazol-5(2H)-ylidene]ethyl phosphate + 2 H2O + H(+). It functions in the pathway cofactor biosynthesis; thiamine diphosphate biosynthesis. Its function is as follows. Catalyzes the rearrangement of 1-deoxy-D-xylulose 5-phosphate (DXP) to produce the thiazole phosphate moiety of thiamine. Sulfur is provided by the thiocarboxylate moiety of the carrier protein ThiS. In vitro, sulfur can be provided by H(2)S. The sequence is that of Thiazole synthase from Cytophaga hutchinsonii (strain ATCC 33406 / DSM 1761 / CIP 103989 / NBRC 15051 / NCIMB 9469 / D465).